Here is a 315-residue protein sequence, read N- to C-terminus: CRISPR-associated endonuclease Cas1 1 (315 aa).

Mn(2+)-binding residues include Glu-144, His-208, and Glu-223.

This sequence belongs to the CRISPR-associated endonuclease Cas1 family. In terms of assembly, homodimer, forms a heterotetramer with a Cas2 homodimer. Requires Mg(2+) as cofactor. The cofactor is Mn(2+).

Functionally, CRISPR (clustered regularly interspaced short palindromic repeat), is an adaptive immune system that provides protection against mobile genetic elements (viruses, transposable elements and conjugative plasmids). CRISPR clusters contain spacers, sequences complementary to antecedent mobile elements, and target invading nucleic acids. CRISPR clusters are transcribed and processed into CRISPR RNA (crRNA). Acts as a dsDNA endonuclease. Involved in the integration of spacer DNA into the CRISPR cassette. This is CRISPR-associated endonuclease Cas1 1 from Thermus thermophilus (strain ATCC 27634 / DSM 579 / HB8).